The following is a 237-amino-acid chain: MANKRVLVKFSGEALAGEAGYGIDTKILNFISQEIKSLVEANIEVGIVIGGGNIIRGVTAAQDGIIKRTSGDYMGMLATVINGIAMQEACEHAGLQVRMQTAIKMEQIAEPYINRRAVRHLEKGRVVIFAAGTGNPFFTTDTAATLRAVEIGAEVIIKATKVDGVYDKDPNKFSDAIKLQELSYEQALNDNIKVMDDTSIALAKDNSLPILVCDMFKKGNLLDILQNGNMKNCSIVK.

9–12 (KFSG) is a binding site for ATP. Positions 17–22 (GEAGYG) are involved in allosteric activation by GTP. Gly-51 serves as a coordination point for UMP. Residues Gly-52 and Arg-56 each contribute to the ATP site. UMP-binding positions include Asp-72 and 133–140 (TGNPFFTT). Positions 160, 166, and 169 each coordinate ATP.

Belongs to the UMP kinase family. As to quaternary structure, homohexamer.

It is found in the cytoplasm. The enzyme catalyses UMP + ATP = UDP + ADP. It functions in the pathway pyrimidine metabolism; CTP biosynthesis via de novo pathway; UDP from UMP (UMPK route): step 1/1. Its activity is regulated as follows. Allosterically activated by GTP. Inhibited by UTP. Functionally, catalyzes the reversible phosphorylation of UMP to UDP. The chain is Uridylate kinase from Sulfurimonas denitrificans (strain ATCC 33889 / DSM 1251) (Thiomicrospira denitrificans (strain ATCC 33889 / DSM 1251)).